Reading from the N-terminus, the 144-residue chain is Small ribosomal subunit protein eS17 (144 aa).

Belongs to the eukaryotic ribosomal protein eS17 family.

This is Small ribosomal subunit protein eS17 (RPS17) from Solanum lycopersicum (Tomato).